We begin with the raw amino-acid sequence, 98 residues long: NADH-ubiquinone oxidoreductase chain 4L (98 aa).

3 helical membrane-spanning segments follow: residues methionine 1–methionine 21, histidine 25–threonine 45, and alanine 67–valine 87.

The protein belongs to the complex I subunit 4L family. As to quaternary structure, core subunit of respiratory chain NADH dehydrogenase (Complex I) which is composed of 45 different subunits.

It is found in the mitochondrion inner membrane. The enzyme catalyses a ubiquinone + NADH + 5 H(+)(in) = a ubiquinol + NAD(+) + 4 H(+)(out). Its function is as follows. Core subunit of the mitochondrial membrane respiratory chain NADH dehydrogenase (Complex I) which catalyzes electron transfer from NADH through the respiratory chain, using ubiquinone as an electron acceptor. Part of the enzyme membrane arm which is embedded in the lipid bilayer and involved in proton translocation. The sequence is that of NADH-ubiquinone oxidoreductase chain 4L (MT-ND4L) from Talpa europaea (European mole).